Consider the following 282-residue polypeptide: MRALPIARSVSELRAVVDGWKAEGLRVGLVPTMGALHAGHLSLVRLALSKVDRVVASVFVNPTQFGPNEDFAAYPRDEAADAAKLGGAGAHLLYAPDVAGMYPPGFSTTITVSGVSSGLCGDLRPGHFQGVATVVAKLFLRVRPDVAVFGEKDYQQLLVLKRLVNDLDLAIEVIGAPIVRETDGLALSSRNAYLSAEQRALAPGLYRTLRRVGADILGGGRVDDCLAWGIDELKALGFGPVDYLDLRDGATLERLDDAPEGPGRLLCAAYLGKTRLIDNIGV.

Position 33 to 40 (33 to 40 (MGALHAGH)) interacts with ATP. Catalysis depends on H40, which acts as the Proton donor. Q64 lines the (R)-pantoate pocket. Q64 provides a ligand contact to beta-alanine. Position 150–153 (150–153 (GEKD)) interacts with ATP. (R)-pantoate is bound at residue Q156. ATP is bound by residues V179 and 187 to 190 (LSSR).

This sequence belongs to the pantothenate synthetase family. Homodimer.

Its subcellular location is the cytoplasm. It carries out the reaction (R)-pantoate + beta-alanine + ATP = (R)-pantothenate + AMP + diphosphate + H(+). It functions in the pathway cofactor biosynthesis; (R)-pantothenate biosynthesis; (R)-pantothenate from (R)-pantoate and beta-alanine: step 1/1. In terms of biological role, catalyzes the condensation of pantoate with beta-alanine in an ATP-dependent reaction via a pantoyl-adenylate intermediate. The sequence is that of Pantothenate synthetase from Rhodospirillum rubrum (strain ATCC 11170 / ATH 1.1.1 / DSM 467 / LMG 4362 / NCIMB 8255 / S1).